A 165-amino-acid chain; its full sequence is U11/U12 small nuclear ribonucleoprotein 25 kDa protein (165 aa).

Residues 52–137 (MRLSVVKLDG…IRNNSQVTFM (86 aa)) enclose the Ubiquitin-like domain. The segment at 145–165 (RGRHSKRKKHRLFRSLHKTSS) is disordered.

Component of the U11/U12 snRNPs that are part of the U12-type spliceosome.

Its subcellular location is the nucleus. This chain is U11/U12 small nuclear ribonucleoprotein 25 kDa protein (SNRNP25), found in Arabidopsis thaliana (Mouse-ear cress).